Consider the following 432-residue polypeptide: Adenylosuccinate synthetase (432 aa).

Residues 12 to 18 and 40 to 42 contribute to the GTP site; these read GDEGKGK and GHT. Aspartate 13 (proton acceptor) is an active-site residue. 2 residues coordinate Mg(2+): aspartate 13 and glycine 40. Residues 13-16, 38-41, threonine 129, arginine 143, glutamine 224, threonine 239, and arginine 303 contribute to the IMP site; these read DEGK and NAGH. Histidine 41 serves as the catalytic Proton donor. 299 to 305 is a binding site for substrate; it reads VTTGRRR. Residues arginine 305, 331-333, and 413-415 contribute to the GTP site; these read KLD and GVG.

The protein belongs to the adenylosuccinate synthetase family. Homodimer. Mg(2+) serves as cofactor.

It is found in the cytoplasm. It catalyses the reaction IMP + L-aspartate + GTP = N(6)-(1,2-dicarboxyethyl)-AMP + GDP + phosphate + 2 H(+). The protein operates within purine metabolism; AMP biosynthesis via de novo pathway; AMP from IMP: step 1/2. In terms of biological role, plays an important role in the de novo pathway of purine nucleotide biosynthesis. Catalyzes the first committed step in the biosynthesis of AMP from IMP. This Mycolicibacterium paratuberculosis (strain ATCC BAA-968 / K-10) (Mycobacterium paratuberculosis) protein is Adenylosuccinate synthetase.